The chain runs to 180 residues: Large ribosomal subunit protein uL6 (180 aa).

This sequence belongs to the universal ribosomal protein uL6 family. As to quaternary structure, part of the 50S ribosomal subunit.

This protein binds to the 23S rRNA, and is important in its secondary structure. It is located near the subunit interface in the base of the L7/L12 stalk, and near the tRNA binding site of the peptidyltransferase center. The chain is Large ribosomal subunit protein uL6 from Thermodesulfovibrio yellowstonii (strain ATCC 51303 / DSM 11347 / YP87).